The following is a 432-amino-acid chain: Glutamate-1-semialdehyde 2,1-aminomutase (432 aa).

The residue at position 270 (Lys-270) is an N6-(pyridoxal phosphate)lysine.

The protein belongs to the class-III pyridoxal-phosphate-dependent aminotransferase family. HemL subfamily. In terms of assembly, homodimer. The cofactor is pyridoxal 5'-phosphate.

The protein resides in the cytoplasm. It catalyses the reaction (S)-4-amino-5-oxopentanoate = 5-aminolevulinate. The protein operates within porphyrin-containing compound metabolism; protoporphyrin-IX biosynthesis; 5-aminolevulinate from L-glutamyl-tRNA(Glu): step 2/2. The protein is Glutamate-1-semialdehyde 2,1-aminomutase of Acinetobacter baylyi (strain ATCC 33305 / BD413 / ADP1).